Consider the following 592-residue polypeptide: Polyadenylate-binding protein, cytoplasmic and nuclear (592 aa).

Basic and acidic residues predominate over residues 1 to 10 (MSDITEKTAE). The segment at 1–43 (MSDITEKTAEQLENLQINDDQQPAQSASAPSTSASESEASSVS) is disordered. Over residues 11-20 (QLENLQINDD) the composition is skewed to polar residues. Residues 21–43 (QQPAQSASAPSTSASESEASSVS) show a composition bias toward low complexity. RRM domains lie at 50–128 (ASLY…WSER), 138–215 (GNIF…MHVP), 231–308 (TNIY…RAQK), and 334–411 (VNLF…IAQR). Positions 507 to 586 (NQFPRHQQQH…ALAAYENFKK (80 aa)) constitute a PABC domain.

This sequence belongs to the polyadenylate-binding protein type-1 family.

It localises to the cytoplasm. Its subcellular location is the nucleus. Binds the poly(A) tail of mRNA. Appears to be an important mediator of the multiple roles of the poly(A) tail in mRNA biogenesis, stability and translation. In the nucleus, involved in both mRNA cleavage and polyadenylation. Is also required for efficient mRNA export to the cytoplasm. Acts in concert with a poly(A)-specific nuclease (PAN) to affect poly(A) tail shortening, which may occur concomitantly with either nucleocytoplasmic mRNA transport or translational initiation. In the cytoplasm, stimulates translation initiation and regulates mRNA decay through translation termination-coupled poly(A) shortening, probably mediated by PAN. In Kluyveromyces lactis (strain ATCC 8585 / CBS 2359 / DSM 70799 / NBRC 1267 / NRRL Y-1140 / WM37) (Yeast), this protein is Polyadenylate-binding protein, cytoplasmic and nuclear (PAB1).